The primary structure comprises 254 residues: tRNA (guanine-N(1)-)-methyltransferase (254 aa).

S-adenosyl-L-methionine is bound by residues glycine 113 and 133 to 138 (IGDYVL).

This sequence belongs to the RNA methyltransferase TrmD family. As to quaternary structure, homodimer.

Its subcellular location is the cytoplasm. The enzyme catalyses guanosine(37) in tRNA + S-adenosyl-L-methionine = N(1)-methylguanosine(37) in tRNA + S-adenosyl-L-homocysteine + H(+). Specifically methylates guanosine-37 in various tRNAs. This chain is tRNA (guanine-N(1)-)-methyltransferase, found in Edwardsiella ictaluri (strain 93-146).